The sequence spans 571 residues: Peptide-N4-(N-acetyl-beta-glucosaminyl)asparagine amidase A (571 aa).

Residues N121, N143, N197, N241, N318, N367, N390, N423, N457, N481, N524, and N529 are each glycosylated (N-linked (GlcNAc...) asparagine).

In terms of assembly, heterodimer of a large and a small chain. Post-translationally, is highly glycosylated and is largly resistant against self-deglycosylation.

It catalyses the reaction Hydrolysis of an N(4)-(acetyl-beta-D-glucosaminyl)asparagine residue in which the glucosamine residue may be further glycosylated, to yield a (substituted) N-acetyl-beta-D-glucosaminylamine and a peptide containing an aspartate residue.. The protein is Peptide-N4-(N-acetyl-beta-glucosaminyl)asparagine amidase A of Prunus dulcis (Almond).